Here is a 33-residue protein sequence, read N- to C-terminus: Ferredoxin (33 aa).

Residues 3–33 (KYKVRLLSEAEGIDVTIDSADDVYILDAAEE) enclose the 2Fe-2S ferredoxin-type domain.

This sequence belongs to the 2Fe2S plant-type ferredoxin family. [2Fe-2S] cluster serves as cofactor.

It localises to the plastid. The protein resides in the chloroplast. Functionally, ferredoxins are iron-sulfur proteins that transfer electrons in a wide variety of metabolic reactions. This chain is Ferredoxin, found in Porphyridium aerugineum (Red microalga).